A 64-amino-acid polypeptide reads, in one-letter code: LTCKTCPFNTCANSETCPAGKNICYQKKWEEHRGERIERRCVANCPKLGSNDKSLLCCRRDDCN.

5 disulfides stabilise this stretch: cysteine 3/cysteine 24, cysteine 6/cysteine 11, cysteine 17/cysteine 41, cysteine 45/cysteine 57, and cysteine 58/cysteine 63.

Belongs to the three-finger toxin family. Ancestral subfamily. In terms of tissue distribution, expressed by the venom gland.

The protein localises to the secreted. Functionally, produces peripheral paralysis by blocking neuromuscular transmission at the postsynaptic site. Weak inhibitor of the endogenous nicotinic acetylcholine receptors (nAChR) in the human rhabdomyosarcoma TE 671 cell line with an IC(50) of 690 mM. This neurotoxin is lethal to zebrafish by injection at the back of the dorsolateral region, but is not toxic to mice by intraperitoneal injection. The polypeptide is Long neurotoxin MS4 (Micrurus surinamensis (Surinam coral snake)).